The sequence spans 347 residues: uncharacterized protein (347 aa).

The segment at 5–44 (CTICHNTPNRPVRLDCNHEFCYICIKGSIQNDMLNCAVCR) adopts an RING-type zinc-finger fold. In terms of domain architecture, WWE spans 244 to 321 (NVQANFNVAR…NLDAWRQIKR (78 aa)).

This is an uncharacterized protein from Caenorhabditis elegans.